The primary structure comprises 588 residues: MSGSQTVSVIGYTKMAPQSPPATVNELWFIDTQAMFQNYANLRSFSKSNSTETQTTIGGVVFGRKARKQVIHVFFAYAEDLTESNLQFLESSLSSDIELVGNVNIDGQSTLIGNGTFTLQLSSKMLENKNTSEFLDQNVIFNNDHISMEGASCVSKVGFEWSLRAGREQEDVKSAAERLSMASFRFSYLNAEHELVIREHKPETAKQKYMDKFTKGALPYKDVIEFTAMQSLTRDTSNDTEDQKLVPTVKVTKDNKHFTRLVTIGEVVFPAYFGDSSFDLYKRAREALNRRANNTMMVTVNGIRSGRGVTTTTSATYLPPGWVSLLHLQLPSKWTENEKRNYRIRLHKLFNLPSSKPCLRLSQSLPLHSESVRLTNKKLIREPHLSISNYQPAGVVTAVKGPYNYHHYMQDGIDDSGWGCAYRSFQTIWSWFILNGYTDKPVPSHRDIQQALVNIGDKEQKFVGSRQWIGSTEISYVLNELLKLECRFIATNSGAEVVERARELARHFETSGTPVMIGGNMLAHTILGVDFNEMTGETKFLILDPHYTGSEDIKTITSKGWCAWKPASFWSADHFYNMVLAQPPTDSI.

Catalysis depends on residues Cys-420, Asp-544, and His-546.

The protein belongs to the peptidase C78 family. As to quaternary structure, interacts with odr-4.

Its subcellular location is the endoplasmic reticulum membrane. The protein localises to the cytoplasm. It localises to the perinuclear region. Its function is as follows. Thiol protease which recognizes and hydrolyzes the peptide bond at the C-terminal Gly of ufm-1, a ubiquitin-like modifier protein bound to a number of target proteins. Required, with oct-4, for the localization of a subset of 7 transmembrane domain odorant receptors, including odr-10, to the cilia of olfactory neurons AWA and AWC. Operates in aggregation behavior, and responses to oxygen levels. The polypeptide is Ufm1-specific protease (Caenorhabditis briggsae).